Here is a 274-residue protein sequence, read N- to C-terminus: Large ribosomal subunit protein uL2 (274 aa).

The segment at 224 to 256 (AMNPIDHPHGGGEGRTGEGRHAVDPWGNLTKGY) is disordered. Positions 229-246 (DHPHGGGEGRTGEGRHAV) are enriched in basic and acidic residues.

The protein belongs to the universal ribosomal protein uL2 family. As to quaternary structure, part of the 50S ribosomal subunit. Forms a bridge to the 30S subunit in the 70S ribosome.

In terms of biological role, one of the primary rRNA binding proteins. Required for association of the 30S and 50S subunits to form the 70S ribosome, for tRNA binding and peptide bond formation. It has been suggested to have peptidyltransferase activity; this is somewhat controversial. Makes several contacts with the 16S rRNA in the 70S ribosome. In Acidovorax sp. (strain JS42), this protein is Large ribosomal subunit protein uL2.